The chain runs to 1112 residues: Mediator of RNA polymerase II transcription subunit 14 (1112 aa).

The protein belongs to the Mediator complex subunit 14 family. As to quaternary structure, component of the Mediator complex.

The protein localises to the nucleus. Component of the Mediator complex, a coactivator involved in the regulated transcription of nearly all RNA polymerase II-dependent genes. Mediator functions as a bridge to convey information from gene-specific regulatory proteins to the basal RNA polymerase II transcription machinery. Mediator is recruited to promoters by direct interactions with regulatory proteins and serves as a scaffold for the assembly of a functional preinitiation complex with RNA polymerase II and the general transcription factors. The sequence is that of Mediator of RNA polymerase II transcription subunit 14 (RGR1) from Scheffersomyces stipitis (strain ATCC 58785 / CBS 6054 / NBRC 10063 / NRRL Y-11545) (Yeast).